The sequence spans 472 residues: Serine/threonine-protein kinase ULK3 (472 aa).

The Protein kinase domain occupies 14-270 (FILTERLGSG…FQDFFAHPWV (257 aa)). Residues 20-28 (LGSGTYATV) and Lys-44 contribute to the ATP site. The Proton acceptor role is filled by Asp-137. Ser-176 carries the post-translational modification Phosphoserine. The MIT 1 domain maps to 281 to 347 (LAQATALVVE…VSRAEELKAI (67 aa)). Phosphoserine; by autocatalysis is present on residues Ser-350 and Ser-384. The 69-residue stretch at 376–444 (LLAALEVASA…ARAEYLKEQI (69 aa)) folds into the MIT 2 domain. Ser-464 is modified (phosphoserine).

Belongs to the protein kinase superfamily. Ser/Thr protein kinase family. APG1/unc-51/ULK1 subfamily. In terms of assembly, interacts (via protein kinase domain) with SUFU. Autophosphorylated. Autophosphorylation is blocked by interaction with SUFU.

The protein resides in the cytoplasm. The catalysed reaction is L-seryl-[protein] + ATP = O-phospho-L-seryl-[protein] + ADP + H(+). The enzyme catalyses L-threonyl-[protein] + ATP = O-phospho-L-threonyl-[protein] + ADP + H(+). Functionally, serine/threonine protein kinase that acts as a regulator of Sonic hedgehog (SHH) signaling and autophagy. Acts as a negative regulator of SHH signaling in the absence of SHH ligand: interacts with SUFU, thereby inactivating the protein kinase activity and preventing phosphorylation of GLI proteins (GLI1, GLI2 and/or GLI3). Positively regulates SHH signaling in the presence of SHH: dissociates from SUFU, autophosphorylates and mediates phosphorylation of GLI2, activating it and promoting its nuclear translocation. Phosphorylates in vitro GLI2, as well as GLI1 and GLI3, although less efficiently. Also acts as a regulator of autophagy: following cellular senescence, able to induce autophagy. In Rattus norvegicus (Rat), this protein is Serine/threonine-protein kinase ULK3 (Ulk3).